We begin with the raw amino-acid sequence, 160 residues long: Transcriptional regulator MraZ (160 aa).

2 consecutive SpoVT-AbrB domains span residues 5-50 (KFET…EGVY) and 93-136 (AIEC…SQAE).

The protein belongs to the MraZ family. In terms of assembly, forms oligomers.

The protein localises to the cytoplasm. It localises to the nucleoid. The protein is Transcriptional regulator MraZ of Geotalea uraniireducens (strain Rf4) (Geobacter uraniireducens).